We begin with the raw amino-acid sequence, 245 residues long: 3-deoxy-manno-octulosonate cytidylyltransferase (245 aa).

The protein belongs to the KdsB family.

It localises to the cytoplasm. The catalysed reaction is 3-deoxy-alpha-D-manno-oct-2-ulosonate + CTP = CMP-3-deoxy-beta-D-manno-octulosonate + diphosphate. It functions in the pathway nucleotide-sugar biosynthesis; CMP-3-deoxy-D-manno-octulosonate biosynthesis; CMP-3-deoxy-D-manno-octulosonate from 3-deoxy-D-manno-octulosonate and CTP: step 1/1. It participates in bacterial outer membrane biogenesis; lipopolysaccharide biosynthesis. In terms of biological role, activates KDO (a required 8-carbon sugar) for incorporation into bacterial lipopolysaccharide in Gram-negative bacteria. The chain is 3-deoxy-manno-octulosonate cytidylyltransferase from Acaryochloris marina (strain MBIC 11017).